Here is a 719-residue protein sequence, read N- to C-terminus: Phosphoribosylformylglycinamidine synthase subunit PurL (719 aa).

Residue His47 is part of the active site. Tyr50 and Lys89 together coordinate ATP. Glu91 provides a ligand contact to Mg(2+). Substrate is bound by residues 92 to 95 and Arg114; that span reads SHNH. The active-site Proton acceptor is the His93. A Mg(2+)-binding site is contributed by Asp115. Residue Gln238 participates in substrate binding. Asp266 serves as a coordination point for Mg(2+). Residue 310–312 coordinates substrate; that stretch reads ESQ. Positions 488 and 525 each coordinate ATP. Asn526 lines the Mg(2+) pocket. Residue Ser528 participates in substrate binding.

Belongs to the FGAMS family. In terms of assembly, monomer. Part of the FGAM synthase complex composed of 1 PurL, 1 PurQ and 2 PurS subunits.

It localises to the cytoplasm. The enzyme catalyses N(2)-formyl-N(1)-(5-phospho-beta-D-ribosyl)glycinamide + L-glutamine + ATP + H2O = 2-formamido-N(1)-(5-O-phospho-beta-D-ribosyl)acetamidine + L-glutamate + ADP + phosphate + H(+). Its pathway is purine metabolism; IMP biosynthesis via de novo pathway; 5-amino-1-(5-phospho-D-ribosyl)imidazole from N(2)-formyl-N(1)-(5-phospho-D-ribosyl)glycinamide: step 1/2. In terms of biological role, part of the phosphoribosylformylglycinamidine synthase complex involved in the purines biosynthetic pathway. Catalyzes the ATP-dependent conversion of formylglycinamide ribonucleotide (FGAR) and glutamine to yield formylglycinamidine ribonucleotide (FGAM) and glutamate. The FGAM synthase complex is composed of three subunits. PurQ produces an ammonia molecule by converting glutamine to glutamate. PurL transfers the ammonia molecule to FGAR to form FGAM in an ATP-dependent manner. PurS interacts with PurQ and PurL and is thought to assist in the transfer of the ammonia molecule from PurQ to PurL. This Roseobacter denitrificans (strain ATCC 33942 / OCh 114) (Erythrobacter sp. (strain OCh 114)) protein is Phosphoribosylformylglycinamidine synthase subunit PurL.